Consider the following 302-residue polypeptide: uncharacterized protein (302 aa).

3 disordered regions span residues 81 to 100, 155 to 209, and 269 to 302; these read ETSDWDSPASPPVTGAERAA, TVTG…PVNP, and LRIESGSSPGKRPLDDPDEVPSSKRGPSRRALLN. The segment covering 196–209 has biased composition (low complexity); it reads PSLPSSLVSSPVNP.

This is an uncharacterized protein from Ictalurid herpesvirus 1 (strain Auburn) (IcHV-1).